A 531-amino-acid chain; its full sequence is Probable protein phosphatase 2C 66 (531 aa).

Positions 1–47 (MGSCLSSDLPPRAGAGAGASPGWPQRWRRRRQRGVERGGAVSGGGGG) are disordered. Over residues 10 to 25 (PPRAGAGAGASPGWPQ) the composition is skewed to low complexity. The 314-residue stretch at 88 to 401 (AACLHTQQGR…DDCAVVCLFL (314 aa)) folds into the PPM-type phosphatase domain. Mn(2+)-binding residues include Asp-123 and Gly-124. Residues 151-172 (SANEDTSSHQNGSISGSVNSEE) show a composition bias toward polar residues. Residues 151-176 (SANEDTSSHQNGSISGSVNSEESPVV) are disordered. Asp-346 and Asp-392 together coordinate Mn(2+).

The protein belongs to the PP2C family. Mg(2+) is required as a cofactor. The cofactor is Mn(2+).

The enzyme catalyses O-phospho-L-seryl-[protein] + H2O = L-seryl-[protein] + phosphate. The catalysed reaction is O-phospho-L-threonyl-[protein] + H2O = L-threonyl-[protein] + phosphate. This Oryza sativa subsp. japonica (Rice) protein is Probable protein phosphatase 2C 66.